A 357-amino-acid polypeptide reads, in one-letter code: MPFLGQDWRSPGWSWIKTEDGWKRCDPCSHEIRSEDNQYPVNHSIILNSGEEEIFNNDCEYAAKKRKKQHFGNDTAAHSFYREKWIYVHKESTKERHGYCTLGEAFNRLDFSSAIQDIRRFTYVVKLLQLIAKSQLTSLSGVAQKNYFNILDKIVQKVLDDHQNPRLIKDLLQDLSSTLCILVRGVGKSVLVGNINIWICRLETVLNWQEKLQNLQMTKQVNTGLTLSDLPLHMLNNILYRFSDGWDIVTLGQVTPTLYMLSEDRRLWKRLCQYHFAEKQFCRHLILSEKGHIEWKLMYFTLQKYYPTKEQYGDTLHFCRHCSILFWKDSGHPCTAADPDSCFTPVSPEHFIDLFKF.

The interaction with beta-actin stretch occupies residues 1–83 (MPFLGQDWRS…DTAAHSFYRE (83 aa)). The F-box domain maps to 224–271 (GLTLSDLPLHMLNNILYRFSDGWDIVTLGQVTPTLYMLSEDRRLWKRL).

As to quaternary structure, part of a SCF (SKP1-cullin-F-box) protein ligase complex consisting of FBXO25, SKP1, CUL1 and RBX1. Interacts directly with SKP1 and CUL1. Interacts (via C-terminus) with actin (via N-terminus).

It localises to the nucleus. The protein operates within protein modification; protein ubiquitination. Substrate-recognition component of the SCF (SKP1-CUL1-F-box protein)-type E3 ubiquitin ligase complex. May play a role in accumulation of expanded polyglutamine (polyQ) protein huntingtin (HTT). In Rattus norvegicus (Rat), this protein is F-box only protein 25 (Fbxo25).